A 137-amino-acid polypeptide reads, in one-letter code: Ribosomal RNA large subunit methyltransferase H (137 aa).

S-adenosyl-L-methionine-binding positions include Leu56, Gly85, and 104-109 (LSPLTL).

It belongs to the RNA methyltransferase RlmH family. As to quaternary structure, homodimer.

The protein localises to the cytoplasm. It carries out the reaction pseudouridine(1915) in 23S rRNA + S-adenosyl-L-methionine = N(3)-methylpseudouridine(1915) in 23S rRNA + S-adenosyl-L-homocysteine + H(+). Specifically methylates the pseudouridine at position 1915 (m3Psi1915) in 23S rRNA. The polypeptide is Ribosomal RNA large subunit methyltransferase H (Thermus thermophilus (strain ATCC BAA-163 / DSM 7039 / HB27)).